We begin with the raw amino-acid sequence, 668 residues long: Spindle assembly abnormal protein 6 homolog (668 aa).

One can recognise a PISA domain in the interval 39-91 (VHKKELVVRLSDDTDPFFLYNLTLGEEDFQSLKNQQGLLVEFSAFPQRFIDLL). Positions 182–482 (LGVTQQALAE…NVIAWLNKQL (301 aa)) form a coiled coil. The tract at residues 623 to 668 (GSVPVKGQRNGSSAGTVPVRPALPKSGSSPILSAYFPGQQSRLPAS) is disordered.

As to quaternary structure, nine homodimers form a cartwheel structure with an internal diameter of 23 nM and radial spokes connecting to the microtubule triplets.

Its subcellular location is the cytoplasm. The protein resides in the cytoskeleton. The protein localises to the microtubule organizing center. It localises to the centrosome. Functionally, central scaffolding component of the centrioles ensuring their 9-fold symmetry. Required for centrosome biogenesis and duplication: required both for mother-centriole-dependent centriole duplication and deuterosome-dependent centriole amplification in multiciliated cells. The protein is Spindle assembly abnormal protein 6 homolog (sas6) of Xenopus laevis (African clawed frog).